Here is a 100-residue protein sequence, read N- to C-terminus: Small ribosomal subunit protein uS14c (100 aa).

The protein belongs to the universal ribosomal protein uS14 family. Part of the 30S ribosomal subunit.

The protein resides in the plastid. It is found in the chloroplast. Functionally, binds 16S rRNA, required for the assembly of 30S particles. The sequence is that of Small ribosomal subunit protein uS14c from Zygnema circumcarinatum (Green alga).